Reading from the N-terminus, the 127-residue chain is Modulator protein MzrA (127 aa).

Over 1–11 (MRKPRVTLRHL) the chain is Cytoplasmic. Residues 12-31 (AWSTMLLMVLGTGMLFWSAV) form a helical membrane-spanning segment. Over 32 to 127 (RQQESTLAIR…RLRDAPHRMG (96 aa)) the chain is Periplasmic.

This sequence belongs to the MzrA family. As to quaternary structure, interacts with EnvZ.

The protein resides in the cell inner membrane. Functionally, modulates the activity of the EnvZ/OmpR two-component regulatory system, probably by directly modulating EnvZ enzymatic activity and increasing stability of phosphorylated OmpR. This chain is Modulator protein MzrA, found in Citrobacter rodentium (strain ICC168) (Citrobacter freundii biotype 4280).